The following is a 48-amino-acid chain: Thiamine thiazole synthase, chloroplastic (48 aa).

Substrate-binding residues include Ala-18 and Val-40.

The protein belongs to the THI4 family. In terms of assembly, homooctamer. It depends on Fe cation as a cofactor.

The protein resides in the plastid. It is found in the chloroplast. It catalyses the reaction [ADP-thiazole synthase]-L-cysteine + glycine + NAD(+) = [ADP-thiazole synthase]-dehydroalanine + ADP-5-ethyl-4-methylthiazole-2-carboxylate + nicotinamide + 3 H2O + 2 H(+). In terms of biological role, involved in biosynthesis of the thiamine precursor thiazole. Catalyzes the conversion of NAD and glycine to adenosine diphosphate 5-(2-hydroxyethyl)-4-methylthiazole-2-carboxylic acid (ADT), an adenylated thiazole intermediate. The reaction includes an iron-dependent sulfide transfer from a conserved cysteine residue of the protein to a thiazole intermediate. The enzyme can only undergo a single turnover, which suggests it is a suicide enzyme. May have additional roles in adaptation to various stress conditions and in DNA damage tolerance. In Populus euphratica (Euphrates poplar), this protein is Thiamine thiazole synthase, chloroplastic (THI1).